A 483-amino-acid polypeptide reads, in one-letter code: Glycogen synthase (483 aa).

An ADP-alpha-D-glucose-binding site is contributed by K15.

This sequence belongs to the glycosyltransferase 1 family. Bacterial/plant glycogen synthase subfamily.

The enzyme catalyses [(1-&gt;4)-alpha-D-glucosyl](n) + ADP-alpha-D-glucose = [(1-&gt;4)-alpha-D-glucosyl](n+1) + ADP + H(+). The protein operates within glycan biosynthesis; glycogen biosynthesis. In terms of biological role, synthesizes alpha-1,4-glucan chains using ADP-glucose. This is Glycogen synthase from Exiguobacterium sibiricum (strain DSM 17290 / CCUG 55495 / CIP 109462 / JCM 13490 / 255-15).